A 220-amino-acid polypeptide reads, in one-letter code: Ras-related protein Rab-3A (220 aa).

GTP is bound by residues Ser31, Ser32, Val33, Gly34, Lys35, Thr36, Ser37, Thr48, Pro49, Ser53, and Thr54. Thr36 contacts Mg(2+). The Switch 1 motif lies at 49–58; that stretch reads PAFVSTVGID. Mg(2+) is bound by residues Thr54 and Asp77. Residue Gly80 participates in GTP binding. Residues 80 to 96 carry the Switch 2 motif; the sequence is GQERYRTITTAYYRGAM. The residue at position 86 (Thr86) is a Phosphothreonine. Residues Asn135, Lys136, Asp138, Ala166, and Lys167 each contribute to the GTP site. Residues Ser188 and Ser190 each carry the phosphoserine modification. The disordered stretch occupies residues 194–220; sequence ADPAVTGAKQGPQLTDQQAPPHQDCAC. S-geranylgeranyl cysteine attachment occurs at residues Cys218 and Cys220. Cys220 carries the post-translational modification Cysteine methyl ester.

This sequence belongs to the small GTPase superfamily. Rab family. As to quaternary structure, interacts with RIMS1 and RIMS2. Interacts with Rabphilin-3A/RPH3A and Rab effector Noc2/RPH3AL. Interacts with SYTL4. Interacts with RAB3IP. Interacts with SGSM1 and SGSM3. Interacts with SYT1. Interacts with MYH9; this interaction is essential for lysosome exocytosis and plasma membrane repair. Interacts with STXBP1; this interaction promotes RAB3A dissociation from the vesicle membrane. Interacts with SNCA. Interacts with GDI1, GDI2, CHM and CHML; phosphorylation at Thr-86 disrupts these interactions. Interacts with MADD (via uDENN domain); the GTP-bound form is preferred for interaction. The cofactor is Mg(2+). Phosphorylation of Thr-86 in the switch II region by LRRK2 prevents the association of RAB regulatory proteins, including CHM, CHML and RAB GDP dissociation inhibitors GDI1 and GDI2. As to expression, specifically expressed in brain.

It localises to the cytoplasm. It is found in the cytosol. Its subcellular location is the lysosome. The protein resides in the cytoplasmic vesicle. The protein localises to the secretory vesicle. It localises to the cell projection. It is found in the axon. Its subcellular location is the cell membrane. The protein resides in the presynapse. The protein localises to the postsynapse. It carries out the reaction GTP + H2O = GDP + phosphate + H(+). Its activity is regulated as follows. Regulated by guanine nucleotide exchange factors (GEFs) including RAB3IL1 and MADD which promote the exchange of bound GDP for free GTP. Regulated by GTPase activating proteins (GAPs) including RAB3GAP1 and TBC1D10B which increase the GTP hydrolysis activity. Inhibited by GDP dissociation inhibitors (GDIs) which prevent Rab-GDP dissociation. Its function is as follows. The small GTPases Rab are key regulators of intracellular membrane trafficking, from the formation of transport vesicles to their fusion with membranes. Rabs cycle between an inactive GDP-bound form and an active GTP-bound form that is able to recruit to membranes different sets of downstream effectors directly responsible for vesicle formation, movement, tethering and fusion. RAB3A plays a central role in regulated exocytosis and secretion. Controls the recruitment, tethering and docking of secretory vesicles to the plasma membrane. Upon stimulation, switches to its active GTP-bound form, cycles to vesicles and recruits effectors such as RIMS1, RIMS2, Rabphilin-3A/RPH3A, RPH3AL or SYTL4 to help the docking of vesicules onto the plasma membrane. Upon GTP hydrolysis by GTPase-activating protein, dissociates from the vesicle membrane allowing the exocytosis to proceed. Stimulates insulin secretion through interaction with RIMS2 or RPH3AL effectors in pancreatic beta cells. Regulates calcium-dependent lysosome exocytosis and plasma membrane repair (PMR) via the interaction with 2 effectors, SYTL4 and myosin-9/MYH9. Acts as a positive regulator of acrosome content secretion in sperm cells by interacting with RIMS1. Also plays a role in the regulation of dopamine release by interacting with synaptotagmin I/SYT. This chain is Ras-related protein Rab-3A (RAB3A), found in Bos taurus (Bovine).